Consider the following 94-residue polypeptide: Large ribosomal subunit protein bL25 (94 aa).

The protein belongs to the bacterial ribosomal protein bL25 family. As to quaternary structure, part of the 50S ribosomal subunit; part of the 5S rRNA/L5/L18/L25 subcomplex. Contacts the 5S rRNA. Binds to the 5S rRNA independently of L5 and L18.

Its function is as follows. This is one of the proteins that binds to the 5S RNA in the ribosome where it forms part of the central protuberance. This chain is Large ribosomal subunit protein bL25, found in Pectobacterium carotovorum subsp. carotovorum (strain PC1).